Consider the following 1442-residue polypeptide: DNA polymerase III PolC-type (1442 aa).

The Exonuclease domain maps to 426 to 582 (YVVFDVETTG…YDTEATAYIF (157 aa)).

It belongs to the DNA polymerase type-C family. PolC subfamily.

It localises to the cytoplasm. The enzyme catalyses DNA(n) + a 2'-deoxyribonucleoside 5'-triphosphate = DNA(n+1) + diphosphate. In terms of biological role, required for replicative DNA synthesis. This DNA polymerase also exhibits 3' to 5' exonuclease activity. The protein is DNA polymerase III PolC-type of Staphylococcus epidermidis (strain ATCC 12228 / FDA PCI 1200).